The primary structure comprises 521 residues: Exoglucanase 1 (521 aa).

The N-terminal stretch at 1 to 17 (MLAKFAALAALVASANA) is a signal peptide. The segment at 18–450 (QAVCSLTAET…FGPIGSTFSG (433 aa)) is catalytic. Asn32 carries an N-linked (GlcNAc...) asparagine glycan. Glu229 functions as the Nucleophile in the catalytic mechanism. The Proton donor role is filled by Glu234. Asn287 is a glycosylation site (N-linked (GlcNAc...) asparagine). The tract at residues 447-486 (TFSGGSSGTPPSNPSSSVKPVTSTAKPSSTSTASNPSGTG) is disordered. The interval 451-485 (GSSGTPPSNPSSSVKPVTSTAKPSSTSTASNPSGT) is linker. A CBM1 domain is found at 485-521 (TGAAHWAQCGGIGFSGPTTCQSPYTCQKINDYYSQCV). Intrachain disulfides connect Cys493–Cys510 and Cys504–Cys520.

Belongs to the glycosyl hydrolase 7 (cellulase C) family.

The protein localises to the secreted. The catalysed reaction is Hydrolysis of (1-&gt;4)-beta-D-glucosidic linkages in cellulose and cellotetraose, releasing cellobiose from the non-reducing ends of the chains.. In Neurospora crassa (strain ATCC 24698 / 74-OR23-1A / CBS 708.71 / DSM 1257 / FGSC 987), this protein is Exoglucanase 1 (cbh-1).